Consider the following 655-residue polypeptide: p-hydroxybenzoic acid efflux pump subunit AaeB (655 aa).

11 consecutive transmembrane segments (helical) span residues 13–33 (FAVK…HFQL), 38–58 (WAVL…GGEP), 67–89 (GFLR…IAMI), 93–112 (LLMI…ISSL), 121–141 (WGLA…EPLL), 152–172 (EIVI…PRSI), 370–390 (LFWL…IAVV), 407–427 (FIYG…VIIP), 431–451 (QSML…GIEV), 459–479 (MGAL…TFHF), and 482–502 (FLDS…VILL).

The protein belongs to the aromatic acid exporter ArAE (TC 2.A.85) family.

It is found in the cell inner membrane. In terms of biological role, forms an efflux pump with AaeA. Could function as a metabolic relief valve, allowing to eliminate certain compounds when they accumulate to high levels in the cell. The sequence is that of p-hydroxybenzoic acid efflux pump subunit AaeB from Escherichia coli O9:H4 (strain HS).